The sequence spans 383 residues: ATP phosphoribosyltransferase regulatory subunit (383 aa).

This sequence belongs to the class-II aminoacyl-tRNA synthetase family. HisZ subfamily. As to quaternary structure, heteromultimer composed of HisG and HisZ subunits.

The protein resides in the cytoplasm. Its pathway is amino-acid biosynthesis; L-histidine biosynthesis; L-histidine from 5-phospho-alpha-D-ribose 1-diphosphate: step 1/9. Required for the first step of histidine biosynthesis. May allow the feedback regulation of ATP phosphoribosyltransferase activity by histidine. The chain is ATP phosphoribosyltransferase regulatory subunit from Cupriavidus taiwanensis (strain DSM 17343 / BCRC 17206 / CCUG 44338 / CIP 107171 / LMG 19424 / R1) (Ralstonia taiwanensis (strain LMG 19424)).